Here is an 804-residue protein sequence, read N- to C-terminus: Leucine--tRNA ligase (804 aa).

The short motif at proline 40–histidine 51 is the 'HIGH' region element. The short motif at lysine 576–serine 580 is the 'KMSKS' region element. Lysine 579 provides a ligand contact to ATP.

This sequence belongs to the class-I aminoacyl-tRNA synthetase family.

It is found in the cytoplasm. It carries out the reaction tRNA(Leu) + L-leucine + ATP = L-leucyl-tRNA(Leu) + AMP + diphosphate. The polypeptide is Leucine--tRNA ligase (Staphylococcus aureus (strain Mu3 / ATCC 700698)).